Reading from the N-terminus, the 119-residue chain is uncharacterized protein (119 aa).

The protein to T.pallidum TP_0127, TP_0315 and TP_0619.

This is an uncharacterized protein from Treponema pallidum (strain Nichols).